The chain runs to 45 residues: MFSINFLGLLPEAYAPFDPIVDVLPIIPLLFLLLAFVWQSSVRFR.

The propeptide occupies 1–8 (MFSINFLG). The helical transmembrane segment at 17-37 (FDPIVDVLPIIPLLFLLLAFV) threads the bilayer.

Belongs to the PsbK family. In terms of assembly, PSII is composed of 1 copy each of membrane proteins PsbA, PsbB, PsbC, PsbD, PsbE, PsbF, PsbH, PsbI, PsbJ, PsbK, PsbL, PsbM, PsbT, PsbY, PsbZ, Psb30/Ycf12, at least 3 peripheral proteins of the oxygen-evolving complex and a large number of cofactors. It forms dimeric complexes.

The protein resides in the plastid. It is found in the chloroplast thylakoid membrane. One of the components of the core complex of photosystem II (PSII). PSII is a light-driven water:plastoquinone oxidoreductase that uses light energy to abstract electrons from H(2)O, generating O(2) and a proton gradient subsequently used for ATP formation. It consists of a core antenna complex that captures photons, and an electron transfer chain that converts photonic excitation into a charge separation. This chain is Photosystem II reaction center protein K, found in Euglena viridis (Cercaria viridis).